Here is a 173-residue protein sequence, read N- to C-terminus: Probable lipoprotein EnvE (173 aa).

The N-terminal stretch at 1–20 (MTLLSGKTTLVLCLSSILCG) is a signal peptide. A lipid anchor (N-palmitoyl cysteine) is attached at Cys21. Cys21 is lipidated: S-diacylglycerol cysteine.

Its subcellular location is the cell membrane. The sequence is that of Probable lipoprotein EnvE (envE) from Salmonella typhimurium (strain LT2 / SGSC1412 / ATCC 700720).